The primary structure comprises 423 residues: Histidine--tRNA ligase (423 aa).

Belongs to the class-II aminoacyl-tRNA synthetase family. In terms of assembly, homodimer.

It localises to the cytoplasm. The catalysed reaction is tRNA(His) + L-histidine + ATP = L-histidyl-tRNA(His) + AMP + diphosphate + H(+). The polypeptide is Histidine--tRNA ligase (Moorella thermoacetica (strain ATCC 39073 / JCM 9320)).